The primary structure comprises 313 residues: Protein KRE1 (313 aa).

The signal sequence occupies residues 1–26 (MMRRTLLHSFATLLLSLSLWSAAVMA). Residues 72-86 (TTTNDVGTTVTLTQT) form repeat 1. A 2 X approximate repeats region spans residues 72-141 (TTTNDVGTTV…LGTTVTLTQT (70 aa)). The interval 94–114 (PTTTTSTSSTGKTTTTVPTAT) is disordered. The stretch at 127–141 (TTTNDLGTTVTLTQT) is repeat 2. Positions 147 to 181 (TSATSSASSSVSSSVSSSGSSSSVKTTTSTGSAVA) are enriched in low complexity. Residues 147–198 (TSATSSASSSVSSSVSSSGSSSSVKTTTSTGSAVAETGTRPDPSTDFTEPPV) are disordered. Asn288 carries GPI-anchor amidated asparagine lipidation. The propeptide at 289–313 (EAQHLGMSSFTSILGGLLTVLIWFL) is removed in mature form.

The protein belongs to the KRE1 family. Extensively modified; probably through addition of O-linked mannose residues. In terms of processing, the GPI-anchor is attached to the protein in the endoplasmic reticulum and serves to target the protein to the cell surface. There, the glucosamine-inositol phospholipid moiety is cleaved off and the GPI-modified mannoprotein is covalently attached via its lipidless GPI glycan remnant to the 1,6-beta-glucan of the outer cell wall layer.

It localises to the cell membrane. Its subcellular location is the secreted. The protein localises to the cell wall. Functionally, involved in a late stage of cell wall 1,6-beta-glucan synthesis and assembly. Has a structural, rather than enzymic, function within cell wall 1,6-beta-glucan assembly and architecture, possibly by being involved in covalently cross-linking 1,6-beta-glucans to other cell wall components such as 1,3-beta-glucan, chitin and certain mannoproteins. Acts as the plasma membrane receptor for the yeast K1 viral toxin. The protein is Protein KRE1 (KRE1) of Saccharomyces cerevisiae (strain ATCC 204508 / S288c) (Baker's yeast).